The primary structure comprises 176 residues: Large ribosomal subunit protein eL20 (176 aa).

Residue Lys-11 forms a Glycyl lysine isopeptide (Lys-Gly) (interchain with G-Cter in SUMO2) linkage. Residue Tyr-63 is modified to Phosphotyrosine. Ser-71 carries the post-translational modification Phosphoserine. Position 76 is an N6-succinyllysine (Lys-76). Ser-123 bears the Phosphoserine mark. Residues Lys-128 and Lys-170 each participate in a glycyl lysine isopeptide (Lys-Gly) (interchain with G-Cter in SUMO2) cross-link.

It belongs to the eukaryotic ribosomal protein eL20 family. As to quaternary structure, component of the large ribosomal subunit. Binds IPO9 with high affinity.

Its subcellular location is the cytoplasm. Functionally, component of the large ribosomal subunit. The ribosome is a large ribonucleoprotein complex responsible for the synthesis of proteins in the cell. This is Large ribosomal subunit protein eL20 (RPL18A) from Bos taurus (Bovine).